We begin with the raw amino-acid sequence, 461 residues long: Asparagine--tRNA ligase (461 aa).

Belongs to the class-II aminoacyl-tRNA synthetase family. As to quaternary structure, homodimer.

Its subcellular location is the cytoplasm. The catalysed reaction is tRNA(Asn) + L-asparagine + ATP = L-asparaginyl-tRNA(Asn) + AMP + diphosphate + H(+). In Solibacter usitatus (strain Ellin6076), this protein is Asparagine--tRNA ligase.